Consider the following 774-residue polypeptide: Alpha,alpha-trehalose phosphorylase (774 aa).

Substrate is bound at residue 369-370 (WD). Residue Glu498 is the Proton donor of the active site. 610 to 611 (KQ) is a substrate binding site.

The protein belongs to the glycosyl hydrolase 65 family. In terms of assembly, homodimer.

It carries out the reaction alpha,alpha-trehalose + phosphate = beta-D-glucose 1-phosphate + D-glucose. Its pathway is glycan degradation; trehalose degradation. With respect to regulation, inhibited by Cu(2+), Hg(2+), Mg(2+), Mn(2+), Pb(2+) and Zn(2+). Catalyzes the reversible phosphorolytic cleavage of trehalose. Phosphorolysis is specific for trehalose, but D-xylose, D-galactose, L-arabinose, D-fucose, L-fucose, D-glucosamine and 2-deoxy D-glucose can act as substitutes for D-glucose in the synthetic reaction. The chain is Alpha,alpha-trehalose phosphorylase (treP) from Thermoanaerobacter brockii (Thermoanaerobium brockii).